Here is a 252-residue protein sequence, read N- to C-terminus: UPF0246 protein FP0718 (252 aa).

Belongs to the UPF0246 family.

This Flavobacterium psychrophilum (strain ATCC 49511 / DSM 21280 / CIP 103535 / JIP02/86) protein is UPF0246 protein FP0718.